We begin with the raw amino-acid sequence, 1381 residues long: Hepatocyte growth factor receptor (1381 aa).

The first 24 residues, 1 to 24 (MKAPAVLAPGILVLLFTLVQKSKG), serve as a signal peptide directing secretion. The Extracellular portion of the chain corresponds to 25–932 (ECKEALVKST…VIVQPDQNFT (908 aa)). The Sema domain maps to 27–515 (KEALVKSTMN…TGKKITKIPL (489 aa)). N45 carries N-linked (GlcNAc...) asparagine glycosylation. 4 disulfides stabilise this stretch: C95–C101, C98–C160, C133–C141, and C173–C176. N106 carries an N-linked (GlcNAc...) asparagine glycan. Residues N203 and N359 are each glycosylated (N-linked (GlcNAc...) asparagine). 2 cysteine pairs are disulfide-bonded: C299–C364 and C386–C398. 2 N-linked (GlcNAc...) asparagine glycosylation sites follow: N400 and N406. Intrachain disulfides connect C520-C538, C526-C561, C529-C545, and C541-C551. IPT/TIG domains follow at residues 563 to 655 (PTVY…FSYV), 657 to 739 (PVIT…FTYR), and 742 to 836 (PIVY…LIYV). An O-linked (Man) threonine glycan is attached at T582. Residues N607 and N635 are each glycosylated (N-linked (GlcNAc...) asparagine). Residues T676 and T761 are each glycosylated (O-linked (Man) threonine). 3 N-linked (GlcNAc...) asparagine glycosylation sites follow: N785, N879, and N930. The chain crosses the membrane as a helical span at residues 933 to 955 (GLIVGVVSISIILLLLLGLFLWL). The Cytoplasmic portion of the chain corresponds to 956–1381 (KKRKQIKDLG…QDNVDGEGDT (426 aa)). A Phosphoserine modification is found at S966. T977 carries the post-translational modification Phosphothreonine. Residues S990 and S997 each carry the phosphoserine modification. Y1003 bears the Phosphotyrosine mark. The Protein kinase domain occupies 1078–1345 (VHFNEVIGRG…RISAIFSTFI (268 aa)). ATP contacts are provided by residues 1084-1092 (IGRGHFGCV) and K1110. Catalysis depends on D1204, which acts as the Proton acceptor. The tract at residues 1212 to 1381 (LDEKFTVKVA…QDNVDGEGDT (170 aa)) is interaction with RANBP9. Residue Y1230 is modified to Phosphotyrosine. 2 positions are modified to phosphotyrosine; by autocatalysis: Y1234 and Y1235. T1289 carries the phosphothreonine modification. The segment at 1320-1359 (WHPRAELRPSFSELVSRISAIFSTFIGEHYVHVNATYVNV) is interaction with MUC20. A phosphotyrosine; by autocatalysis mark is found at Y1349 and Y1356. Phosphotyrosine is present on Y1365.

It belongs to the protein kinase superfamily. Tyr protein kinase family. Heterodimer made of an alpha chain (50 kDa) and a beta chain (145 kDa) which are disulfide linked. Binds PLXNB1. Interacts when phosphorylated with downstream effectors including STAT3, PIK3R1, SRC, PCLG1, GRB2 and GAB1. Interacts with SPSB1, SPSB2 and SPSB4. Interacts with INPP5D/SHIP1. When phosphorylated at Tyr-1356, interacts with INPPL1/SHIP2. Interacts with RANBP9 and RANBP10, as well as SPSB1, SPSB2, SPSB3 and SPSB4. SPSB1 binding occurs in the presence and in the absence of HGF, however HGF treatment has a positive effect on this interaction. Interacts with MUC20; prevents interaction with GRB2 and suppresses hepatocyte growth factor-induced cell proliferation. Interacts with GRB10. Interacts with PTPN1 and PTPN2. Interacts with HSP90AA1 and HSP90AB1; the interaction suppresses MET kinase activity. Interacts with tensin TNS3. Interacts (when phosphorylated) with tensin TNS4 (via SH2 domain); the interaction increases MET protein stability by inhibiting MET endocytosis and subsequent lysosomal degradation. Autophosphorylated in response to ligand binding on Tyr-1234 and Tyr-1235 in the kinase domain leading to further phosphorylation of Tyr-1349 and Tyr-1356 in the C-terminal multifunctional docking site. Dephosphorylated by PTPRJ at Tyr-1349 and Tyr-1365. Dephosphorylated by PTPN1 and PTPN2. In terms of processing, ubiquitinated. Ubiquitination by CBL regulates the receptor stability and activity through proteasomal degradation. Post-translationally, O-mannosylation of IPT/TIG domains by TMEM260 is required for protein maturation. O-mannosylated residues are composed of single mannose glycans that are not elongated or modified.

It is found in the membrane. The catalysed reaction is L-tyrosyl-[protein] + ATP = O-phospho-L-tyrosyl-[protein] + ADP + H(+). Its activity is regulated as follows. In its inactive state, the C-terminal tail interacts with the catalytic domain and inhibits the kinase activity. Upon ligand binding, the C-terminal tail is displaced and becomes phosphorylated, thus increasing the kinase activity. In terms of biological role, receptor tyrosine kinase that transduces signals from the extracellular matrix into the cytoplasm by binding to hepatocyte growth factor/HGF ligand. Regulates many physiological processes including proliferation, scattering, morphogenesis and survival. Ligand binding at the cell surface induces autophosphorylation of MET on its intracellular domain that provides docking sites for downstream signaling molecules. Following activation by ligand, interacts with the PI3-kinase subunit PIK3R1, PLCG1, SRC, GRB2, STAT3 or the adapter GAB1. Recruitment of these downstream effectors by MET leads to the activation of several signaling cascades including the RAS-ERK, PI3 kinase-AKT, or PLCgamma-PKC. The RAS-ERK activation is associated with the morphogenetic effects while PI3K/AKT coordinates prosurvival effects. During embryonic development, MET signaling plays a role in gastrulation, development and migration of muscles and neuronal precursors, angiogenesis and kidney formation. In adults, participates in wound healing as well as organ regeneration and tissue remodeling. Also promotes differentiation and proliferation of hematopoietic cells. The polypeptide is Hepatocyte growth factor receptor (MET) (Sus scrofa (Pig)).